The following is a 481-amino-acid chain: 4-hydroxyphenylacetate 3-monooxygenase oxygenase component (481 aa).

Residues 100 to 104 (RSPDY) and His142 contribute to the substrate site. Residues 142 to 144 (HAL), 148 to 151 (QVNR), and Thr185 each bind FAD. 197 to 198 (ST) is a substrate binding site. 444 to 447 (DPVR) provides a ligand contact to FAD.

This sequence belongs to the FADH(2)-utilizing monooxygenase family. As to quaternary structure, homotetramer consisting of a dimer of dimers. 4-HPA 3-monooxygenase consists of a reductase component HpaC and an oxygenase component HpaB.

It catalyses the reaction 4-hydroxyphenylacetate + FADH2 + O2 = 3,4-dihydroxyphenylacetate + FAD + H2O + H(+). The protein operates within aromatic compound metabolism; 4-hydroxyphenylacetate degradation; pyruvate and succinate semialdehyde from 4-hydroxyphenylacetate: step 1/7. Utilizes FADH(2) supplied by HpaC, to catalyze the hydroxylation of 4-hydroxyphenylacetic acid, leading to the production of 3,4-dihydroxyphenylacetic acid (DHPA). This chain is 4-hydroxyphenylacetate 3-monooxygenase oxygenase component, found in Thermus thermophilus (strain ATCC 27634 / DSM 579 / HB8).